The following is a 489-amino-acid chain: 6-phosphogluconate dehydrogenase, decarboxylating 1 (489 aa).

NADP(+) contacts are provided by residues 9–14 (GLAVMG) and 32–34 (NRT). Serine 50 is modified (phosphoserine). NADP(+)-binding positions include 74–76 (VKA) and asparagine 102. Substrate contacts are provided by residues asparagine 102 and 128 to 130 (SGG). Lysine 182 functions as the Proton acceptor in the catalytic mechanism. 185–186 (HN) is a binding site for substrate. Glutamate 189 (proton donor) is an active-site residue. Residues tyrosine 190, lysine 259, arginine 286, arginine 446, and histidine 452 each coordinate substrate.

It belongs to the 6-phosphogluconate dehydrogenase family. As to quaternary structure, homodimer.

The protein localises to the cytoplasm. It catalyses the reaction 6-phospho-D-gluconate + NADP(+) = D-ribulose 5-phosphate + CO2 + NADPH. It functions in the pathway carbohydrate degradation; pentose phosphate pathway; D-ribulose 5-phosphate from D-glucose 6-phosphate (oxidative stage): step 3/3. Catalyzes the oxidative decarboxylation of 6-phosphogluconate to ribulose 5-phosphate and CO(2), with concomitant reduction of NADP to NADPH. This chain is 6-phosphogluconate dehydrogenase, decarboxylating 1 (GND1), found in Saccharomyces cerevisiae (strain ATCC 204508 / S288c) (Baker's yeast).